The following is a 355-amino-acid chain: MKIAVLPGDGIGPEIVAEAVKVLNALDEKFEMETAPVGGAGYEAEGHPLPDNTLKLAKEADAILFGAVGDWKYDSLDRPLRPEQAILGLRKHLQLFANFRPAICYPELTGASSLKPELVAGLDILIVRELNGDIYFGQPRGVREAPDGLFKGAREGFDTMRYSEPEVRRIAHVAFQAAAKRGKKLCSVDKANVLETFQFWKDIVIDVSKEYPDVELSHMYVDNAAMQLVKAPKSFDVIVTGNMFGDILSDEAAMLTGSIGMLPSASLDANNKGLYEPSHGSAPDIAGKGVANPLATILSAAMMLRYSLNRAEQADRIENAVKKVLAQGYRTADIVTPGCKQVGTREMGEAVLAAL.

The substrate site is built by arginine 90, arginine 100, arginine 128, and aspartate 222. Residues aspartate 222, aspartate 246, and aspartate 250 each coordinate Mg(2+). Position 280–292 (glycine 280–asparagine 292) interacts with NAD(+).

It belongs to the isocitrate and isopropylmalate dehydrogenases family. LeuB type 1 subfamily. Homodimer. Requires Mg(2+) as cofactor. Mn(2+) is required as a cofactor.

It is found in the cytoplasm. It carries out the reaction (2R,3S)-3-isopropylmalate + NAD(+) = 4-methyl-2-oxopentanoate + CO2 + NADH. Its pathway is amino-acid biosynthesis; L-leucine biosynthesis; L-leucine from 3-methyl-2-oxobutanoate: step 3/4. In terms of biological role, catalyzes the oxidation of 3-carboxy-2-hydroxy-4-methylpentanoate (3-isopropylmalate) to 3-carboxy-4-methyl-2-oxopentanoate. The product decarboxylates to 4-methyl-2 oxopentanoate. The protein is 3-isopropylmalate dehydrogenase of Cupriavidus metallidurans (strain ATCC 43123 / DSM 2839 / NBRC 102507 / CH34) (Ralstonia metallidurans).